The primary structure comprises 145 residues: Methylglyoxal synthase (145 aa).

One can recognise an MGS-like domain in the interval 1–145; it reads MNSKKKIALV…YYQKIRKDNF (145 aa). Residues His-12, Lys-16, 38 to 41, and 58 to 59 each bind substrate; these read TGTT and SG. The active-site Proton donor/acceptor is Asp-64. His-91 is a binding site for substrate.

Belongs to the methylglyoxal synthase family.

It carries out the reaction dihydroxyacetone phosphate = methylglyoxal + phosphate. Its function is as follows. Catalyzes the formation of methylglyoxal from dihydroxyacetone phosphate. The sequence is that of Methylglyoxal synthase from Clostridium acetobutylicum (strain ATCC 824 / DSM 792 / JCM 1419 / IAM 19013 / LMG 5710 / NBRC 13948 / NRRL B-527 / VKM B-1787 / 2291 / W).